A 546-amino-acid chain; its full sequence is Chaperonin GroEL (546 aa).

ATP is bound by residues 30 to 33 (TLGP), lysine 51, 87 to 91 (DGTTT), glycine 415, and aspartate 496. Residues 527 to 546 (EKKAPAGAPGGMGGMGDMDF) form a disordered region. Over residues 534-546 (APGGMGGMGDMDF) the composition is skewed to gly residues.

Belongs to the chaperonin (HSP60) family. In terms of assembly, forms a cylinder of 14 subunits composed of two heptameric rings stacked back-to-back. Interacts with the co-chaperonin GroES.

It localises to the cytoplasm. The catalysed reaction is ATP + H2O + a folded polypeptide = ADP + phosphate + an unfolded polypeptide.. Functionally, together with its co-chaperonin GroES, plays an essential role in assisting protein folding. The GroEL-GroES system forms a nano-cage that allows encapsulation of the non-native substrate proteins and provides a physical environment optimized to promote and accelerate protein folding. This chain is Chaperonin GroEL, found in Rhodospirillum centenum (strain ATCC 51521 / SW).